The sequence spans 761 residues: MEHQDSSPPRFRNSGSNRVTVYNGTTLPTMPKSATPTSSSTTVTTHLQNIKEEETNDDELTQVDRSSPRVLGRISSTSSSSSNIDLRDNLDMLHEIEKSNTNISLSAPNLHEELGVLSDKGNSKEELALLPPLPHTGEMEITPQFDINEAIFERDDISHSSRLEPDDVLTKLANSTRDATGEDQGFVVMTHGHDASTNDDSQLSATILDNQTSFDLSKALEMTSHSNISNIINSSGSEGRRSRTPVSNSTLKPNLSSPESAEREANTTSSSSTSDHGATMQYDPKKIITPIPVLPSSVREQQQNNAPLRERSRSNSSALASTLRDTIISGLPQNINSVERKLSRKSNRSRKNTVTFEDRLQKLPPLSTQISNQYAKVAPAENNIALHFHNLPTPVSNTQTPVTFQSESGLTGGEKKMPFLRRASSALLRKTSAKNCSNLTRTNTPTLSTSSTFESDLNARQPMLIRRSSTIDNKLPRRQLSCSKLYSRLNSDSKFANSSRASEEVLVSTPNDTEHVYRKTSLGSKIKRGFTRILSDSNNSKEILTLSPKSMVTTGPTELSFSSLSTVGGHPTTPVSKENDRVSIDGVSTFNRASTSLPESSTDDISPLREEGKINVPKRTSSRKILSKNSSKKNVLPEQQTKPSEIYLDKEALQSFVPVLSVTEGTHRINRSSLQTQSTIGLCITNLRNKEGMKLNAKEYVEILAQQQRKEDERYAVLERKFASCRWCSDKDLQYLKKKRISMNKIWSDYVRFYRGKLNNP.

Met-1 carries the N-acetylmethionine modification. Disordered regions lie at residues 1-82 (MEHQ…SSSS), 229-320 (SNII…SALA), and 590-640 (FNRA…PEQQ). The segment covering 13–27 (NSGSNRVTVYNGTTL) has biased composition (polar residues). Over residues 28–45 (PTMPKSATPTSSSTTVTT) the composition is skewed to low complexity. Composition is skewed to polar residues over residues 244–259 (TPVS…SSPE), 266–276 (NTTSSSSTSDH), 590–604 (FNRA…STDD), and 627–640 (SKNS…PEQQ).

Post-translationally, phosphorylated by CDC28.

This is an uncharacterized protein from Saccharomyces cerevisiae (strain ATCC 204508 / S288c) (Baker's yeast).